Reading from the N-terminus, the 312-residue chain is Methionyl-tRNA formyltransferase (312 aa).

109-112 (SILP) serves as a coordination point for (6S)-5,6,7,8-tetrahydrofolate.

The protein belongs to the Fmt family.

It catalyses the reaction L-methionyl-tRNA(fMet) + (6R)-10-formyltetrahydrofolate = N-formyl-L-methionyl-tRNA(fMet) + (6S)-5,6,7,8-tetrahydrofolate + H(+). In terms of biological role, attaches a formyl group to the free amino group of methionyl-tRNA(fMet). The formyl group appears to play a dual role in the initiator identity of N-formylmethionyl-tRNA by promoting its recognition by IF2 and preventing the misappropriation of this tRNA by the elongation apparatus. This is Methionyl-tRNA formyltransferase from Dictyoglomus thermophilum (strain ATCC 35947 / DSM 3960 / H-6-12).